Consider the following 82-residue polypeptide: Small ribosomal subunit protein bS16 (82 aa).

Belongs to the bacterial ribosomal protein bS16 family.

The protein is Small ribosomal subunit protein bS16 of Tolumonas auensis (strain DSM 9187 / NBRC 110442 / TA 4).